We begin with the raw amino-acid sequence, 1374 residues long: Y' element ATP-dependent helicase YLL066C (1374 aa).

The disordered stretch occupies residues 321–345 (AGEAASSDHDQKISRVTRKRPREPK). In terms of domain architecture, Helicase ATP-binding spans 375–552 (EIYMADTPSV…LQRIGLTGLA (178 aa)). ATP is bound at residue 388-395 (APPGYGKT). Positions 498 to 501 (DEFH) match the DEAH box motif. One can recognise a Helicase C-terminal domain in the interval 609–758 (KLLLALFEIE…EFYGLESKKG (150 aa)). Low complexity predominate over residues 832–975 (ANASTNATTN…ATTTESTNAS (144 aa)). A disordered region spans residues 832–999 (ANASTNATTN…RFHPVTDINK (168 aa)). Residues 976–999 (AKEDANKDGNAEDNRFHPVTDINK) show a composition bias toward basic and acidic residues.

Belongs to the helicase family. Yeast subtelomeric Y' repeat subfamily.

Catalyzes DNA unwinding and is involved in telomerase-independent telomere maintenance. This is Y' element ATP-dependent helicase YLL066C from Saccharomyces cerevisiae (strain ATCC 204508 / S288c) (Baker's yeast).